Reading from the N-terminus, the 216-residue chain is MTTPVSFHPQAFIELALSRGVLKFGEFTLKSGRVSPYFFNAGLLNDGEALSLLAQGYADKLTQCENVDVIFGPAYKGIPFVAATAVALSQTHNKSVPWGFNRKEAKDHGEGGVLVGAAVEGKKVWIIDDVITAGTAIREVVTILKNAGATIAGVLVALDRQERGQGELSAIQEVQKELEIPVHALITMKDLMDYLEAKGEKEALANMQAYREKYGI.

Residue K30 participates in 5-phospho-alpha-D-ribose 1-diphosphate binding. Position 38–39 (38–39) interacts with orotate; that stretch reads FF. 5-phospho-alpha-D-ribose 1-diphosphate is bound by residues 75 to 76, R102, K103, K106, H108, and 128 to 136; these read YK and DDVITAGTA. Positions 132 and 160 each coordinate orotate.

This sequence belongs to the purine/pyrimidine phosphoribosyltransferase family. PyrE subfamily. In terms of assembly, homodimer. Requires Mg(2+) as cofactor.

The catalysed reaction is orotidine 5'-phosphate + diphosphate = orotate + 5-phospho-alpha-D-ribose 1-diphosphate. It functions in the pathway pyrimidine metabolism; UMP biosynthesis via de novo pathway; UMP from orotate: step 1/2. Catalyzes the transfer of a ribosyl phosphate group from 5-phosphoribose 1-diphosphate to orotate, leading to the formation of orotidine monophosphate (OMP). This is Orotate phosphoribosyltransferase from Acinetobacter baumannii (strain ACICU).